Reading from the N-terminus, the 478-residue chain is MIEVLLVTICLAAFPYQGSSIILESGNVNDYEVIYPRKVTALPKGAVQPKYEDAMQYELKVNGEPVVLHLEKNKGLFSKDYSETHYSPDGRKITTNPPVEDHCYYHGRIENDADSTASISACNGLKGHFKLQGETYLIEPLKLSDSEAHAVFKFENVEKEDEAPKMCGVTQNWESYEPIKKASQSNLTPEHQRYIELFLVVDHGMFMKYNGNSDKIRRRIHQMVNIMKEAYRYLYIDIALTGVEIWSNKDMINVQPAAPQTLDSFGEWRKTDLLNRKSHDNAQLLTSTDFNGPTIGLAYVGSMCDPKRSTAVIEDHSETDLLVAVTMAHELGHNLGIRHDTGSCSCGGYSCIMAPVISHDIAKYFSDCSYIQCWDFIMKDNPQCILNKQLRTDTVSTPVSGNELLEAGEECDCGTPGNPCCDAATCKLRPGAQCAEGLCCDQCRFMKEGTVCRRARGDDMDDYCNGISAGCPRNPFHA.

An N-terminal signal peptide occupies residues 1 to 20 (MIEVLLVTICLAAFPYQGSS). A propeptide spanning residues 21–187 (IILESGNVND…PIKKASQSNL (167 aa)) is cleaved from the precursor. Intrachain disulfides connect C304-C384, C344-C368, and C346-C351. Zn(2+) is bound at residue H329. E330 is a catalytic residue. 2 residues coordinate Zn(2+): H333 and H339. A propeptide spanning residues 390-405 (LRTDTVSTPVSGNELL) is cleaved from the precursor. A Disintegrin domain is found at 397 to 478 (TPVSGNELLE…AGCPRNPFHA (82 aa)). Disulfide bonds link C411–C426, C413–C421, C420–C443, C434–C440, C439–C464, and C452–C471. The Cell attachment site motif lies at 456–458 (RGD).

This sequence belongs to the venom metalloproteinase (M12B) family. P-II subfamily. P-IIa sub-subfamily. Monomer. Expressed by the venom gland.

It is found in the secreted. Binds alpha-5/beta-1 (ITGAV/ITGB1), alpha-V/beta-3 (ITGAV/ITGB3) and alpha-M/beta-2 (ITGAM/ITGB2) integrins. Is a potent inhibitor of platelet aggregation induced by ADP, collagen, and thrombin. Induces neutrophil chemotaxis and inhibits the chemotaxis of human neutrophils toward fMLP, IL-8, and jarastatin itself. Directly activates an integrin-coupled signaling and modulate the MAPK pathway in different ways, leading the neutrophils to express different functional response. Induces Erk-2 translocation to nucleus and a delay of the spontaneous apoptosis of neutrophils. Increases the IL-8 mRNA levels in neutrophils. When injected simultaneously with melanoma cells in mice, jarastatin, flavoridin (FL) and kistrin (KR) significantly reduce tumor lung colonization. Inhibits mouse melanoma B16F10 cell growth in vitro. When it interacts with melanoma cells, it induces actin cytoskeleton rearrangement, increasing actin polymerization and PTK2/FAK1 phosphorylation. Interferes with NF-kappaB translocation in melanoma cells. This is Zinc metalloproteinase/disintegrin from Bothrops jararaca (Jararaca).